The chain runs to 310 residues: HPr kinase/phosphorylase (310 aa).

Residues His-138 and Lys-159 contribute to the active site. 153–160 (GKSGVGKS) contributes to the ATP binding site. Ser-160 is a binding site for Mg(2+). The active-site Proton acceptor; for phosphorylation activity. Proton donor; for dephosphorylation activity is Asp-177. An important for the catalytic mechanism of both phosphorylation and dephosphorylation region spans residues 201–210 (LEIRGLGIIN). Position 202 (Glu-202) interacts with Mg(2+). Residue Arg-243 is part of the active site. The important for the catalytic mechanism of dephosphorylation stretch occupies residues 264–269 (PVRPGR).

It belongs to the HPrK/P family. In terms of assembly, homohexamer. Mg(2+) is required as a cofactor.

The enzyme catalyses [HPr protein]-L-serine + ATP = [HPr protein]-O-phospho-L-serine + ADP + H(+). It catalyses the reaction [HPr protein]-O-phospho-L-serine + phosphate + H(+) = [HPr protein]-L-serine + diphosphate. Catalyzes the ATP- as well as the pyrophosphate-dependent phosphorylation of a specific serine residue in HPr, a phosphocarrier protein of the phosphoenolpyruvate-dependent sugar phosphotransferase system (PTS). HprK/P also catalyzes the pyrophosphate-producing, inorganic phosphate-dependent dephosphorylation (phosphorolysis) of seryl-phosphorylated HPr (P-Ser-HPr). The two antagonistic activities of HprK/P are regulated by several intracellular metabolites, which change their concentration in response to the absence or presence of rapidly metabolisable carbon sources (glucose, fructose, etc.) in the growth medium. Also phosphorylates/dephosphorylates the HPr-like catabolite repression protein crh on a specific serine residue. Therefore, by controlling the phosphorylation state of HPr and crh, HPrK/P is a sensor enzyme that plays a major role in the regulation of carbon metabolism and sugar transport: it mediates carbon catabolite repression (CCR), and regulates PTS-catalyzed carbohydrate uptake and inducer exclusion. The sequence is that of HPr kinase/phosphorylase from Bacillus pumilus (strain SAFR-032).